A 2513-amino-acid polypeptide reads, in one-letter code: Polyprotein P1234 (2513 aa).

One can recognise an Alphavirus-like MT domain in the interval 28 to 259; the sequence is EPKQVTPNDH…ESRKLLQSWH (232 aa). The tract at residues 244–263 is nsP1 membrane-binding; the sequence is GSTLYPESRKLLQSWHLPSV. Residues Cys-417 and Cys-419 are each lipidated (S-palmitoyl cysteine; by host). The (+)RNA virus helicase ATP-binding domain maps to 690 to 842; it reads DLTSPPYHEF…HNICTQVYHK (153 aa). Position 721–728 (721–728) interacts with a ribonucleoside 5'-triphosphate; it reads GVPGSGKS. The (+)RNA virus helicase C-terminal domain maps to 843-991; it reads SISRRCTLPV…IKEWEAEHAS (149 aa). The Peptidase C9 domain occupies 1004-1327; it reads DTFQNKANVC…NQLNAVYAGL (324 aa). The tract at residues 1005–1024 is nucleolus localization signal; that stretch reads TFQNKANVCWAKCLVPILDT. Catalysis depends on Cys-1013, which acts as the For cysteine protease nsP2 activity. Residues 1058-1067 carry the Nuclear export signal motif; that stretch reads TRIYGVDLDS. The active-site For cysteine protease nsP2 activity is His-1083. The short motif at 1182–1186 is the Nuclear localization signal element; that stretch reads PTKRV. ADP-D-ribose is bound by residues Asp-1343, Asn-1357, Gly-1365, Gly-1445, Val-1446, and Tyr-1447. Positions 1595, 1597, 1620, and 1638 each coordinate Zn(2+). 2 short sequence motifs (FGDF; binding to host G3BP1) span residues 1851 to 1854 and 1869 to 1872; these read FGDF. Residues 2267–2382 form the RdRp catalytic domain; sequence DAVLETDIAS…HGVVSDALMA (116 aa).

Interacts with non-structural protein 3. Interacts with RNA-directed RNA polymerase nsP4. Interacts with protease nsP2. interacts with itself. In terms of assembly, interacts with mRNA-capping enzyme nsP1. Interacts with host DDX1. Interacts with host DDX3. Interacts (via C-terminus) with host G3BP1; this interaction inhibits the formation of host stress granules on viral mRNAs and the nsp3-G3BP1 complexes bind viral RNAs and probably orchestrate the assembly of viral replication complexes. Interacts (via C-terminus) with host G3BP2; this interaction inhibits the formation of host stress granules on viral mRNAs and the nsp3-G3BP2 complexes bind viral RNAs and probably orchestrate the assembly of viral replication complexes. As to quaternary structure, interacts with mRNA-capping enzyme nsP1. Interacts with protease nsP2. interacts with itself. Interacts with RNA-directed RNA polymerase nsP4. Interacts with mRNA-capping enzyme nsP1. Interacts with KPNA1/karyopherin-alpha1; this interaction probably allows the active transport of protease nsP2 into the host nucleus. Mg(2+) is required as a cofactor. The cofactor is Mn(2+). In terms of processing, specific enzymatic cleavages in vivo yield mature proteins. The processing of the polyprotein is temporally regulated. In early stages (1.7 hpi), P1234 is first cleaved in trans through its nsP2 protease activity, releasing P123 and nsP4, which associate to form the early replication complex. At the same time, P1234 is also cut at the nsP1/nsP2 site early in infection but with lower efficiency. After replication of the viral minus-strand RNAs (4 hpi), the polyproteins are cut at the nsP1/nsP2 and nsP2/nsP3 sites very efficiently, preventing accumulation of P123 and P1234 and allowing the formation of the late replication complex. NsP3/nsP4 site is not cleaved anymore and P34 is produced rather than nsP4. Post-translationally, specific enzymatic cleavages in vivo yield mature proteins. The processing of the polyprotein is temporally regulated. In early stages (1.7 hpi), P123 is cleaved at the nsP1/nsP2 site with low efficiency. After replication of the viral minus-strand RNAs (4 hpi), the polyproteins are cut at the nsP1/nsP2 and nsP2/nsP3 sites very efficiently, preventing accumulation of P123 and allowing the formation of the late replication complex. Palmitoylated by host palmitoyltransferases ZDHHC2 and ZDHHC19. In terms of processing, phosphorylated by host on serines and threonines. Post-translationally, ubiquitinated; targets the protein for rapid degradation via the ubiquitin system. Nsp4 is present in extremely low quantities due to low frequency of translation through the amber stop-codon and the degradation by the ubiquitin pathway.

The protein resides in the host cytoplasmic vesicle membrane. It is found in the host cell membrane. The protein localises to the host cell projection. It localises to the host filopodium. Its subcellular location is the host nucleus. The protein resides in the host cytoplasm. It carries out the reaction GTP + S-adenosyl-L-methionine = N(7)-methyl-GTP + S-adenosyl-L-homocysteine. The catalysed reaction is N(7)-methyl-GTP + L-histidyl-[protein] = N(tele)-(N(7)-methylguanosine 5'-phospho)-L-histidyl-[protein] + diphosphate. It catalyses the reaction N(tele)-(N(7)-methylguanosine 5'-phospho)-L-histidyl-[protein] + a 5'-end diphospho-(purine-ribonucleoside) in mRNA + H(+) = a 5'-end (N(7)-methyl 5'-triphosphoguanosine)-(purine-ribonucleoside) in mRNA + L-histidyl-[protein]. The enzyme catalyses a 5'-end triphospho-ribonucleoside in mRNA + H2O = a 5'-end diphospho-ribonucleoside in mRNA + phosphate + H(+). It carries out the reaction a ribonucleoside 5'-triphosphate + H2O = a ribonucleoside 5'-diphosphate + phosphate + H(+). The catalysed reaction is ATP + H2O = ADP + phosphate + H(+). It catalyses the reaction RNA(n) + a ribonucleoside 5'-triphosphate = RNA(n+1) + diphosphate. The enzyme catalyses 4-O-(ADP-D-ribosyl)-L-aspartyl-[protein] + H2O = L-aspartyl-[protein] + ADP-D-ribose + H(+). It carries out the reaction 5-O-(ADP-D-ribosyl)-L-glutamyl-[protein] + H2O = L-glutamyl-[protein] + ADP-D-ribose + H(+). The catalysed reaction is RNA(n) + ATP = RNA(n)-3'-adenine ribonucleotide + diphosphate. It catalyses the reaction ADP-alpha-D-ribose 1''-phosphate + H2O = ADP-D-ribose + phosphate. Functionally, inactive precursor of the viral replicase, which is activated by cleavages carried out by the viral protease nsP2. In terms of biological role, the early replication complex formed by the polyprotein P123 and nsP4 synthesizes minus-strand RNAs. As soon P123 is cleaved into mature proteins, the plus-strand RNAs synthesis begins. Cytoplasmic capping enzyme that catalyzes two virus-specific reactions: methyltransferase and nsP1 guanylyltransferase. mRNA-capping is necessary since all viral RNAs are synthesized in the cytoplasm, and host capping enzymes are restricted to the nucleus. The enzymatic reaction involves a covalent link between 7-methyl-GMP and nsP1, whereas eukaryotic capping enzymes form a covalent complex only with GMP. nsP1 capping consists in the following reactions: GTP is first methylated into 7-methyl-GMP and then is covalently linked to nsP1 to form the m7GMp-nsP1 complex from which 7-methyl-GMP complex is transferred to the mRNA to create the cap structure. NsP1 is also needed for the initiation of the minus-strand RNAs synthesis. Probably serves as a membrane anchor for the replication complex composed of nsP1-nsP4. Palmitoylated nsP1 is remodeling host cell cytoskeleton, and induces filopodium-like structure formation at the surface of the host cell. Its function is as follows. Multifunctional protein whose N-terminus is part of the RNA polymerase complex and displays NTPase, RNA triphosphatase and helicase activities. NTPase and RNA triphosphatase are involved in viral RNA capping and helicase keeps a check on the dsRNA replication intermediates. The C-terminus harbors a protease that specifically cleaves the polyproteins and releases the mature proteins. Required for the shutoff of minus-strand RNAs synthesis. Specifically inhibits the host IFN response by promoting the nuclear export of host STAT1. Also inhibits host transcription by inducing the rapid proteasome-dependent degradation of POLR2A, a catalytic subunit of the RNAPII complex. The resulting inhibition of cellular protein synthesis serves to ensure maximal viral gene expression and to evade host immune response. Functionally, seems to be essential for minus-strand RNAs and subgenomic 26S mRNAs synthesis. Displays mono-ADP-ribosylhydrolase activity. ADP-ribosylation is a post-translational modification that controls various processes of the host cell and the virus probably needs to revert it for optimal viral replication. Binds proteins of G3BP family and sequesters them into the viral RNA replication complexes thereby inhibiting the formation of host stress granules on viral mRNAs. The nsp3-G3BP complexes bind viral RNAs and probably orchestrate the assembly of viral replication complexes, thanks to the ability of G3BP family members to self-assemble and bind DNA. In terms of biological role, RNA dependent RNA polymerase. Replicates genomic and antigenomic RNA by recognizing replications specific signals. The early replication complex formed by the polyprotein P123 and nsP4 synthesizes minus-strand RNAs. The late replication complex composed of fully processed nsP1-nsP4 is responsible for the production of genomic and subgenomic plus-strand RNAs. This Anopheles (Human) protein is Polyprotein P1234.